A 121-amino-acid polypeptide reads, in one-letter code: Ribosome-binding factor A (121 aa).

Belongs to the RbfA family. In terms of assembly, monomer. Binds 30S ribosomal subunits, but not 50S ribosomal subunits or 70S ribosomes.

It localises to the cytoplasm. One of several proteins that assist in the late maturation steps of the functional core of the 30S ribosomal subunit. Associates with free 30S ribosomal subunits (but not with 30S subunits that are part of 70S ribosomes or polysomes). Required for efficient processing of 16S rRNA. May interact with the 5'-terminal helix region of 16S rRNA. In Brevibacillus brevis (strain 47 / JCM 6285 / NBRC 100599), this protein is Ribosome-binding factor A.